The following is a 223-amino-acid chain: Probable transaldolase (223 aa).

Residue lysine 92 is the Schiff-base intermediate with substrate of the active site.

Belongs to the transaldolase family. Type 3B subfamily.

The protein localises to the cytoplasm. It carries out the reaction D-sedoheptulose 7-phosphate + D-glyceraldehyde 3-phosphate = D-erythrose 4-phosphate + beta-D-fructose 6-phosphate. The protein operates within carbohydrate degradation; pentose phosphate pathway; D-glyceraldehyde 3-phosphate and beta-D-fructose 6-phosphate from D-ribose 5-phosphate and D-xylulose 5-phosphate (non-oxidative stage): step 2/3. Its function is as follows. Transaldolase is important for the balance of metabolites in the pentose-phosphate pathway. The chain is Probable transaldolase from Thermus thermophilus (strain ATCC BAA-163 / DSM 7039 / HB27).